The chain runs to 384 residues: Dual specificity protein phosphatase 5 (384 aa).

A Rhodanese domain is found at 19–141 (AEARCVVLDC…FYSQYPECCV (123 aa)). Positions 53–74 (RRARGGAVSARYVLADEAARAR) match the Nuclear localization signal motif. Residues 178–319 (GPVEILPFLY…LLQYESEILP (142 aa)) form the Tyrosine-protein phosphatase domain. The active-site Phosphocysteine intermediate is C263.

It belongs to the protein-tyrosine phosphatase family. Non-receptor class dual specificity subfamily.

The protein localises to the nucleus. The catalysed reaction is O-phospho-L-tyrosyl-[protein] + H2O = L-tyrosyl-[protein] + phosphate. It catalyses the reaction O-phospho-L-seryl-[protein] + H2O = L-seryl-[protein] + phosphate. The enzyme catalyses O-phospho-L-threonyl-[protein] + H2O = L-threonyl-[protein] + phosphate. In terms of biological role, dual specificity protein phosphatase; active with phosphotyrosine, phosphoserine and phosphothreonine residues. The highest relative activity is toward ERK1. The chain is Dual specificity protein phosphatase 5 (Dusp5) from Rattus norvegicus (Rat).